A 549-amino-acid polypeptide reads, in one-letter code: YTH domain-containing family protein 1 (549 aa).

5 disordered regions span residues 29-102, 139-165, 243-262, 273-298, and 425-458; these read QAPW…QPNM, GHPPHQAPVDSQSNVVRGPPRKPRQSG, GASGITAPTGPSATTPQQAV, DSTETQSDNADTDTPTAVGTPDAKGP, and REDSSEGVTQEEPAPAVAEQDDTTGGLDGNSENK. The segment covering 49 to 61 has biased composition (polar residues); sequence VVGQTQSSPQYNG. A compositionally biased stretch (low complexity) spans 71–102; sequence QGYYMPQQQQQQQQMPQYYGGPMSPSQPQPNM. Composition is skewed to polar residues over residues 251–260 and 273–289; these read TGPSATTPQQ and DSTETQSDNADTDTPTA. Residues 307–513 enclose the YTH domain; it reads DRFFVLKSLT…SVGRRLIGLF (207 aa).

It belongs to the YTHDF family. YTHDF1 subfamily.

Specifically recognizes and binds N6-methyladenosine (m6A)-containing mRNAs, and regulates their stability. M6A is a modification present at internal sites of mRNAs and some non-coding RNAs and plays a role in mRNA stability and processing. Directly interacts with the acid phosphatase APHA mRNA to increase its stability. In Cryphonectria parasitica (strain ATCC 38755 / EP155), this protein is YTH domain-containing family protein 1.